A 447-amino-acid polypeptide reads, in one-letter code: MREIVHLQTGQCGNQIGAAFWQTISGEHGLDGSGVYNGTSDLQLERMNVYFNEASNNKFVPRAVLVDLEPGTMDAVRAGPFGQLFRPDNFVFGQSGAGNNWAKGHYTEGAELVDQVLDVVRREAEGCDCLQGFQITHSLGGGTGAGMGTLLISKIREEFPDRMMATYSVVPSPKVSDTVVEPYNATLSIHQLVENSDETFCIDNEALYDICMRTLKLNNPSYGDLNHLVSAVMSGVTTCLRFPGQLNSDLRKLAVNMVPFPRLHFFMVGFAPLTSRGAHSFRAVTVPELTQQMFDPKNMMAASDFRNGRYLTCSAYFRGKVSMKEVEDQMRNVQNKNSSYFVEWIPNNVQTALCSIPPRGLKMSSTFVGNSTSIQELFKRVGDQFTAMFRRKAFLHWYTGEGMDEMEFTEAESNMNDLVSEYQQYQEASVSEGEEEYDEEAPLEAEE.

Residues Gln-11, Glu-69, Ser-138, Gly-142, Thr-143, Gly-144, Asn-204, and Asn-226 each contribute to the GTP site. Position 69 (Glu-69) interacts with Mg(2+). The segment at 424–447 (QYQEASVSEGEEEYDEEAPLEAEE) is disordered. Acidic residues predominate over residues 432–447 (EGEEEYDEEAPLEAEE).

The protein belongs to the tubulin family. Dimer of alpha and beta chains. A typical microtubule is a hollow water-filled tube with an outer diameter of 25 nm and an inner diameter of 15 nM. Alpha-beta heterodimers associate head-to-tail to form protofilaments running lengthwise along the microtubule wall with the beta-tubulin subunit facing the microtubule plus end conferring a structural polarity. Microtubules usually have 13 protofilaments but different protofilament numbers can be found in some organisms and specialized cells. Mg(2+) is required as a cofactor.

It is found in the cytoplasm. It localises to the cytoskeleton. Functionally, tubulin is the major constituent of microtubules, a cylinder consisting of laterally associated linear protofilaments composed of alpha- and beta-tubulin heterodimers. Microtubules grow by the addition of GTP-tubulin dimers to the microtubule end, where a stabilizing cap forms. Below the cap, tubulin dimers are in GDP-bound state, owing to GTPase activity of alpha-tubulin. This chain is Tubulin beta chain (TUB1), found in Cochliobolus heterostrophus (Southern corn leaf blight fungus).